A 74-amino-acid polypeptide reads, in one-letter code: Small ribosomal subunit protein bS18 (74 aa).

It belongs to the bacterial ribosomal protein bS18 family. In terms of assembly, part of the 30S ribosomal subunit. Forms a tight heterodimer with protein bS6.

Its function is as follows. Binds as a heterodimer with protein bS6 to the central domain of the 16S rRNA, where it helps stabilize the platform of the 30S subunit. The polypeptide is Small ribosomal subunit protein bS18 (Alkalilimnicola ehrlichii (strain ATCC BAA-1101 / DSM 17681 / MLHE-1)).